A 324-amino-acid chain; its full sequence is ATP-dependent 6-phosphofructokinase (324 aa).

An ATP-binding site is contributed by glycine 15. 25–29 is a binding site for ADP; that stretch reads RGVVR. ATP is bound by residues 76–77 and 106–109; these read RF and GDGS. Aspartate 107 is a Mg(2+) binding site. 130-132 provides a ligand contact to substrate; that stretch reads TID. The active-site Proton acceptor is aspartate 132. Arginine 159 is an ADP binding site. Substrate is bound by residues arginine 167 and 174-176; that span reads MGR. ADP-binding positions include 190-192, lysine 216, and 218-220; these read GCE and KRH. Residues glutamate 227, arginine 248, and 254–257 contribute to the substrate site; that span reads HIQR.

The protein belongs to the phosphofructokinase type A (PFKA) family. ATP-dependent PFK group I subfamily. Prokaryotic clade 'B1' sub-subfamily. Homotetramer. Requires Mg(2+) as cofactor.

Its subcellular location is the cytoplasm. It catalyses the reaction beta-D-fructose 6-phosphate + ATP = beta-D-fructose 1,6-bisphosphate + ADP + H(+). The protein operates within carbohydrate degradation; glycolysis; D-glyceraldehyde 3-phosphate and glycerone phosphate from D-glucose: step 3/4. Allosterically activated by ADP and other diphosphonucleosides, and allosterically inhibited by phosphoenolpyruvate. Its function is as follows. Catalyzes the phosphorylation of D-fructose 6-phosphate to fructose 1,6-bisphosphate by ATP, the first committing step of glycolysis. This chain is ATP-dependent 6-phosphofructokinase, found in Actinobacillus pleuropneumoniae serotype 5b (strain L20).